Consider the following 590-residue polypeptide: Aspartate--tRNA(Asp/Asn) ligase (590 aa).

Position 175 (Glu-175) interacts with L-aspartate. An aspartate region spans residues 199 to 202 (QQYK). Residues Arg-221 and His-450 each contribute to the L-aspartate site. 221-223 (RDE) provides a ligand contact to ATP. Glu-484 lines the ATP pocket. Arg-491 is an L-aspartate binding site. 536 to 539 (GVDR) serves as a coordination point for ATP.

It belongs to the class-II aminoacyl-tRNA synthetase family. Type 1 subfamily. As to quaternary structure, homodimer.

Its subcellular location is the cytoplasm. The catalysed reaction is tRNA(Asx) + L-aspartate + ATP = L-aspartyl-tRNA(Asx) + AMP + diphosphate. In terms of biological role, aspartyl-tRNA synthetase with relaxed tRNA specificity since it is able to aspartylate not only its cognate tRNA(Asp) but also tRNA(Asn). Reaction proceeds in two steps: L-aspartate is first activated by ATP to form Asp-AMP and then transferred to the acceptor end of tRNA(Asp/Asn). This Rhodopseudomonas palustris (strain HaA2) protein is Aspartate--tRNA(Asp/Asn) ligase.